The sequence spans 728 residues: Catalase-peroxidase (728 aa).

Positions 91-218 (WHSAGTYRTA…LAAVQMGLIY (128 aa)) form a cross-link, tryptophyl-tyrosyl-methioninium (Trp-Tyr) (with M-244). His92 serves as the catalytic Proton acceptor. Residues 218–244 (YVNPEGPDGNPDPVAAARDIRDTFARM) constitute a cross-link (tryptophyl-tyrosyl-methioninium (Tyr-Met) (with W-91)). Heme b is bound at residue His259.

It belongs to the peroxidase family. Peroxidase/catalase subfamily. In terms of assembly, homodimer or homotetramer. Requires heme b as cofactor. Formation of the three residue Trp-Tyr-Met cross-link is important for the catalase, but not the peroxidase activity of the enzyme.

It catalyses the reaction H2O2 + AH2 = A + 2 H2O. The catalysed reaction is 2 H2O2 = O2 + 2 H2O. Bifunctional enzyme with both catalase and broad-spectrum peroxidase activity. This is Catalase-peroxidase from Burkholderia thailandensis (strain ATCC 700388 / DSM 13276 / CCUG 48851 / CIP 106301 / E264).